The chain runs to 323 residues: HTH-type transcriptional regulator CysB (323 aa).

Residues 1–60 enclose the HTH lysR-type domain; it reads MKMHQLRYIVEIVNQNLNVTEAANALYTSQPGISKQVRLLEDELGLEIFERHGKHIKSIT. A DNA-binding region (H-T-H motif) is located at residues 19–38; it reads VTEAANALYTSQPGISKQVR.

It belongs to the LysR transcriptional regulatory family. Homotetramer.

Its subcellular location is the cytoplasm. This protein is a positive regulator of gene expression for the cysteine regulon. The inducer for CysB is N-acetylserine. In Haemophilus influenzae (strain ATCC 51907 / DSM 11121 / KW20 / Rd), this protein is HTH-type transcriptional regulator CysB (cysB).